A 233-amino-acid polypeptide reads, in one-letter code: Large ribosomal subunit protein uL3 (233 aa).

The segment at 146-171 is disordered; it reads GSQRASHGNSRSHRVPGSIGQAQDPG. The residue at position 168 (glutamine 168) is an N5-methylglutamine.

It belongs to the universal ribosomal protein uL3 family. As to quaternary structure, part of the 50S ribosomal subunit. Forms a cluster with proteins L14 and L19. Methylated by PrmB.

One of the primary rRNA binding proteins, it binds directly near the 3'-end of the 23S rRNA, where it nucleates assembly of the 50S subunit. This chain is Large ribosomal subunit protein uL3, found in Bordetella bronchiseptica (strain ATCC BAA-588 / NCTC 13252 / RB50) (Alcaligenes bronchisepticus).